The sequence spans 417 residues: Peptidyl-Asp metalloendopeptidase (417 aa).

The signal sequence occupies residues 1–25; the sequence is MLSRSIGKAAGGLVLGLSVAAAAHA. Histidine 327 provides a ligand contact to Zn(2+). Glutamate 328 is an active-site residue. Residues histidine 331 and histidine 337 each coordinate Zn(2+).

The protein belongs to the peptidase M72 family. It depends on Zn(2+) as a cofactor.

The enzyme catalyses Cleavage of Xaa-|-Asp, Xaa-|-Glu and Xaa-|-cysteic acid bonds.. Its function is as follows. Metalloprotease, specifically cleaves on the N-terminal side of aspartyl, glutamyl and cysteic acid residues. This is Peptidyl-Asp metalloendopeptidase from Stenotrophomonas maltophilia (strain K279a).